The primary structure comprises 988 residues: Putative disease resistance protein RGA4 (988 aa).

Residues 137-439 (AAAATRETGF…MAHGFLLSKG (303 aa)) form the NB-ARC domain. 184–191 (GMGGLGKT) provides a ligand contact to ATP. 14 LRR repeats span residues 526–548 (FVSL…SIGD), 549–572 (LLHL…LCKL), 574–595 (NLQT…QTSK), 596–620 (LSSL…GLLT), 638–662 (LGEL…KNDT), 674–696 (LQSL…EVKV), 751–776 (LPCL…DVHS), 784–808 (FPSL…EGEE), 829–851 (LSSV…SISN), 852–876 (LSTL…MFTS), 878–900 (TNLE…SLTS), 901–925 (LNAL…GLEG), 927–950 (TSLT…LQHL), and 966–988 (KRCD…LDIH).

This sequence belongs to the disease resistance NB-LRR family.

Disease resistance protein. Resistance proteins guard the plant against pathogens that contain an appropriate avirulence protein via a direct or indirect interaction with this avirulence protein. That triggers a defense system which restricts the pathogen growth. The sequence is that of Putative disease resistance protein RGA4 (RGA4) from Solanum bulbocastanum (Wild potato).